Reading from the N-terminus, the 141-residue chain is Sporulation-specific cell division protein SsgB (141 aa).

Belongs to the SsgA family. Interacts with SsgA. Interacts with FtsZ (via N-terminus).

It localises to the cell septum. Its function is as follows. Involved in sporulation-specific cell division. Required for early stages of sporulation. Important in the process of growth cessation prior to sporulation-specific cell division. Recruits cell division protein FtsZ to the future septum sites and tethers the contractile ring structure (Z ring) to the cytoplasmic membrane during sporulation. Stimulates polymerization and filament length of FtsZ in vitro. This chain is Sporulation-specific cell division protein SsgB, found in Saccharopolyspora erythraea (strain ATCC 11635 / DSM 40517 / JCM 4748 / NBRC 13426 / NCIMB 8594 / NRRL 2338).